The primary structure comprises 233 residues: MKRGKNYQQAGEKFDRLTLYEPKEALELVKEIAKAKFDETVEVHIKLGVDPRHADQQVRGTVSLPNGTGKTRKVLVFAKGEKIKEAELAGADYVGGEDLAEKIQGGWFDFDVAVATPDMMAVVGKMGKILGPRGLMPNPKAGTVTFDIERTIKELKAGRIEYRVDKSAIVHAPIGRISFEVDKLQENLNAFAEALLKARPAAAKGQYMRSVTVCSTMSPGVKINPLVLMAANK.

Belongs to the universal ribosomal protein uL1 family. Part of the 50S ribosomal subunit.

Functionally, binds directly to 23S rRNA. The L1 stalk is quite mobile in the ribosome, and is involved in E site tRNA release. In terms of biological role, protein L1 is also a translational repressor protein, it controls the translation of the L11 operon by binding to its mRNA. The sequence is that of Large ribosomal subunit protein uL1 from Syntrophomonas wolfei subsp. wolfei (strain DSM 2245B / Goettingen).